The following is a 721-amino-acid chain: Mitogen-activated protein kinase 6 (721 aa).

Residue Met-1 forms a Peptide (Met-Gly) (interchain with G-Cter in ubiquitin) linkage. A Protein kinase domain is found at 20–316 (YMDLKPLGCG…AEEALSHPYM (297 aa)). Residues 26–34 (LGCGGNGLV) and Lys-49 contribute to the ATP site. Catalysis depends on Asp-152, which acts as the Proton acceptor. Ser-189 bears the Phosphoserine; by PAK1, PAK2 and PAK3 mark. The SEG motif signature appears at 189-191 (SEG). Positions 332-337 (FHIEDE) match the FRIEDE motif motif. Residues Ser-386, Ser-452, Ser-556, Ser-558, Ser-665, and Ser-684 each carry the phosphoserine modification. The segment covering 701 to 715 (AMKSSPQIPHQTYSS) has biased composition (polar residues). The disordered stretch occupies residues 701 to 721 (AMKSSPQIPHQTYSSILKHLN).

The protein belongs to the protein kinase superfamily. CMGC Ser/Thr protein kinase family. MAP kinase subfamily. In terms of assembly, heterodimer with ERK4/MAPK4. Interacts with (via FRIEDE motif) MAPKAPK5. Interacts with UBE3A; this interaction may be indirect and mediated by HERC2, possibly via HERC2 interaction with NEURL4. Requires Mg(2+) as cofactor. In terms of processing, phosphorylated at Ser-189 by PAK1, PAK2 and PAK3 resulting in catalytic activation. Phosphorylated by MAPKAPK5 at other sites. Ubiquitination at Met-1 leads to degradation by the proteasome pathway. As to expression, highest expression in the skeletal muscle, followed by the brain. Also found in heart, placenta, lung, liver, pancreas, kidney and skin fibroblasts.

It is found in the cytoplasm. It localises to the nucleus. It carries out the reaction L-seryl-[protein] + ATP = O-phospho-L-seryl-[protein] + ADP + H(+). It catalyses the reaction L-threonyl-[protein] + ATP = O-phospho-L-threonyl-[protein] + ADP + H(+). Activated by phosphorylation at Ser-189. In terms of biological role, atypical MAPK protein. Phosphorylates microtubule-associated protein 2 (MAP2) and MAPKAPK5. The precise role of the complex formed with MAPKAPK5 is still unclear, but the complex follows a complex set of phosphorylation events: upon interaction with atypical MAPKAPK5, ERK3/MAPK6 is phosphorylated at Ser-189 and then mediates phosphorylation and activation of MAPKAPK5, which in turn phosphorylates ERK3/MAPK6. May promote entry in the cell cycle. This chain is Mitogen-activated protein kinase 6 (MAPK6), found in Homo sapiens (Human).